Reading from the N-terminus, the 112-residue chain is Protein preY, mitochondrial (112 aa).

Residues 1 to 34 constitute a mitochondrion transit peptide; it reads MLSATCRRLAPALRRLRALSAVAGRFLQVPGARL. In terms of domain architecture, TRM112 spans 49–95; it reads HPALLQFLVCPLSKKPLRYEASTNELVNEELGIAYPIIDGIPNMIPQ.

The protein belongs to the PREY family. As to quaternary structure, interacts (via TRM112 domain) with NDUFAF5; the interaction is direct and stabilizes NDUFAF5 protein. Interacts with COQ5; the interaction is direct, stabilizes COQ5 protein and associates PYURF with COQ enzyme complex.

The protein resides in the mitochondrion. In mitochondria, S-adenosylmethionine-dependent methyltransferase chaperone that supports both coenzyme Q biosynthesis, by stabilizing its components, such as COQ5, and NADH:ubiquinone oxidoreductase complex (complex I, MT-ND1) assembly, by stabilizing complex I assembly factors, such as NDUFAF5. This Mus musculus (Mouse) protein is Protein preY, mitochondrial (Pyurf).